Consider the following 228-residue polypeptide: Orotidine 5'-phosphate decarboxylase (228 aa).

Substrate-binding positions include Asp11, Lys33, 60–69 (DLKLHDIPNT), Thr117, Arg178, Gln186, Gly206, and Arg207. The active-site Proton donor is the Lys62.

The protein belongs to the OMP decarboxylase family. Type 1 subfamily. In terms of assembly, homodimer.

The catalysed reaction is orotidine 5'-phosphate + H(+) = UMP + CO2. The protein operates within pyrimidine metabolism; UMP biosynthesis via de novo pathway; UMP from orotate: step 2/2. Catalyzes the decarboxylation of orotidine 5'-monophosphate (OMP) to uridine 5'-monophosphate (UMP). The protein is Orotidine 5'-phosphate decarboxylase of Ehrlichia canis (strain Jake).